The following is a 1361-amino-acid chain: Cell migration-inducing and hyaluronan-binding protein (1361 aa).

An N-terminal signal peptide occupies residues Met-1 to Ser-30. In terms of domain architecture, G8 spans Gln-44–Lys-166. N-linked (GlcNAc...) asparagine glycosylation is found at Asn-119, Asn-165, Asn-312, Asn-370, and Asn-420. Residues Gly-176–Ser-317 enclose the GG-type lectin 1 domain. Positions Ala-295–Thr-591 are necessary for its endoplasmic reticulum (ER) retention and interaction with HSPA5. PbH1 repeat units lie at residues Asp-572 to Gly-594, Ser-595 to Asp-617, Ile-719 to Asn-741, and Gly-798 to Ser-819. 2 N-linked (GlcNAc...) asparagine glycosylation sites follow: Asn-889 and Asn-921. The 135-residue stretch at Asn-1227–Leu-1361 folds into the GG-type lectin 2 domain.

This sequence belongs to the CEMIP family. As to quaternary structure, interacts with EPHA2 and ITPR3. Interacts with HSPA5/BIP; the interaction induces calcium leakage from the endoplasmic reticulum and cell migration. Interacts with clathrin heavy chain/CLTC. Post-translationally, N-glycosylated; glycosylation is not necessary for HA-binding. As to expression, expressed in dermal and in synovial fibroblasts. Strongly expressed in gastric cancers compared with the paired normal tissues. Strongly expressed in both ductal carcinoma and invasive breast cancer cells compared with benign epithelial cells (at protein level). Strongly expressed in brain, placenta, prostate, breast, lung and testis. Expressed in fibroblasts, epithelial cells and cancer cells. In ear, it is specifically expressed in inner ear. Expressed in cochlea and vestibule tissues. Strongly expressed in gastric cancers compared with the paired normal tissues. Strongly expressed in colon adenocarcinomas compared with normal colonic mucosas. Strongly expressed in breast cancer as compared to normal breast tissue.

Its subcellular location is the nucleus. The protein resides in the cytoplasm. It is found in the endoplasmic reticulum. The protein localises to the cell membrane. It localises to the membrane. Its subcellular location is the clathrin-coated pit. The protein resides in the secreted. The catalysed reaction is Random hydrolysis of (1-&gt;4)-linkages between N-acetyl-beta-D-glucosamine and D-glucuronate residues in hyaluronate.. Its activity is regulated as follows. Activity is up-regulated by histamine. Functionally, mediates depolymerization of hyaluronic acid (HA) via the cell membrane-associated clathrin-coated pit endocytic pathway. Binds to hyaluronic acid. Hydrolyzes high molecular weight hyaluronic acid to produce an intermediate-sized product, a process that may occur through rapid vesicle endocytosis and recycling without intracytoplasmic accumulation or digestion in lysosomes. Involved in hyaluronan catabolism in the dermis of the skin and arthritic synovium. Positively regulates epithelial-mesenchymal transition (EMT), and hence tumor cell growth, invasion and cancer dissemination. In collaboration with HSPA5/BIP, promotes cancer cell migration in a calcium and PKC-dependent manner. May be involved in hearing. This chain is Cell migration-inducing and hyaluronan-binding protein, found in Homo sapiens (Human).